The sequence spans 146 residues: Large ribosomal subunit protein uL15 (146 aa).

Over residues 1 to 13 (MKLHELKPSEGSR) the composition is skewed to basic and acidic residues. Residues 1–57 (MKLHELKPSEGSRKTRNRVGRGIGSGNGKTAGKGHKGQNARSGGGVRPGFEGGQMPL) are disordered. Composition is skewed to gly residues over residues 21–31 (RGIGSGNGKTA) and 42–52 (SGGGVRPGFEG).

Belongs to the universal ribosomal protein uL15 family. As to quaternary structure, part of the 50S ribosomal subunit.

Binds to the 23S rRNA. This is Large ribosomal subunit protein uL15 from Bacillus subtilis (strain 168).